A 380-amino-acid chain; its full sequence is Transaldolase (380 aa).

Lys-141 functions as the Schiff-base intermediate with substrate in the catalytic mechanism.

Belongs to the transaldolase family. Type 2 subfamily.

It localises to the cytoplasm. The catalysed reaction is D-sedoheptulose 7-phosphate + D-glyceraldehyde 3-phosphate = D-erythrose 4-phosphate + beta-D-fructose 6-phosphate. It participates in carbohydrate degradation; pentose phosphate pathway; D-glyceraldehyde 3-phosphate and beta-D-fructose 6-phosphate from D-ribose 5-phosphate and D-xylulose 5-phosphate (non-oxidative stage): step 2/3. Its function is as follows. Transaldolase is important for the balance of metabolites in the pentose-phosphate pathway. This Trichodesmium erythraeum (strain IMS101) protein is Transaldolase.